The sequence spans 131 residues: Protein NEGATIVE REGULATOR OF RESISTANCE (131 aa).

Disordered stretches follow at residues 1–33 (MDAT…DEVS) and 51–131 (TRRL…RAPA). The Nuclear localization signal signature appears at 12–15 (KRKR). The span at 116–131 (PPSDAPATPRSARAPA) shows a compositional bias: low complexity.

It belongs to the NPR1-interactor family. Interacts with NPR1/NH1. Interacts with NPR2/NH2.

The protein localises to the nucleus. Functionally, acts as a negative regulator of disease resistance. Acts on basal resistance, age-related resistance and resistance mediated by the LRR receptor kinase XA21. Plants over-expressing NRR display enhanced susceptibility to the bacterial blight Xanthomonas oryzae pv. oryzae (Xoo). The chain is Protein NEGATIVE REGULATOR OF RESISTANCE from Oryza sativa subsp. indica (Rice).